The primary structure comprises 173 residues: Shikimate kinase (173 aa).

An ATP-binding site is contributed by 14-19 (GAGKST). A Mg(2+)-binding site is contributed by Ser18. Substrate is bound by residues Asp36, Arg60, and Gly82. Arg120 is a binding site for ATP. Arg140 contacts substrate. Gln157 lines the ATP pocket.

The protein belongs to the shikimate kinase family. As to quaternary structure, monomer. Mg(2+) serves as cofactor.

Its subcellular location is the cytoplasm. It catalyses the reaction shikimate + ATP = 3-phosphoshikimate + ADP + H(+). It participates in metabolic intermediate biosynthesis; chorismate biosynthesis; chorismate from D-erythrose 4-phosphate and phosphoenolpyruvate: step 5/7. In terms of biological role, catalyzes the specific phosphorylation of the 3-hydroxyl group of shikimic acid using ATP as a cosubstrate. The sequence is that of Shikimate kinase from Buchnera aphidicola subsp. Acyrthosiphon pisum (strain APS) (Acyrthosiphon pisum symbiotic bacterium).